A 126-amino-acid polypeptide reads, in one-letter code: C-type natriuretic peptide (126 aa).

An N-terminal signal peptide occupies residues 1–23; the sequence is MHLSQLLACALLLSLLSLRPSEA. Positions 20 to 71 are disordered; sequence PSEAKPGAPPKVPRTPPGEEVAEPQAAGGGQKKGDKTPGGGGANLKDDRSRL. The propeptide occupies 24 to 73; that stretch reads KPGAPPKVPRTPPGEEVAEPQAAGGGQKKGDKTPGGGGANLKDDRSRLLR. Over residues 26-35 the composition is skewed to pro residues; sequence GAPPKVPRTP. The span at 46 to 62 shows a compositional bias: gly residues; the sequence is AGGGQKKGDKTPGGGGA. Cysteines 110 and 126 form a disulfide.

The protein belongs to the natriuretic peptide family. Post-translationally, degraded by IDE (in vitro).

Its subcellular location is the secreted. Hormone which plays a role in endochondral ossification through regulation of cartilaginous growth plate chondrocytes proliferation and differentiation. May also be vasoactive and natriuretic. Acts by specifically binding and stimulating NPR2 to produce cGMP. Binds the clearance receptor NPR3. In Ovis aries (Sheep), this protein is C-type natriuretic peptide (NPPC).